We begin with the raw amino-acid sequence, 182 residues long: Adenine phosphoribosyltransferase (182 aa).

This sequence belongs to the purine/pyrimidine phosphoribosyltransferase family. In terms of assembly, homodimer.

It localises to the cytoplasm. It catalyses the reaction AMP + diphosphate = 5-phospho-alpha-D-ribose 1-diphosphate + adenine. Its pathway is purine metabolism; AMP biosynthesis via salvage pathway; AMP from adenine: step 1/1. In terms of biological role, catalyzes a salvage reaction resulting in the formation of AMP, that is energically less costly than de novo synthesis. The chain is Adenine phosphoribosyltransferase from Campylobacter fetus subsp. fetus (strain 82-40).